Here is a 316-residue protein sequence, read N- to C-terminus: MKVLWVALVVALLAGCQADMEGELGSEEPLPPEQPRGQDSQPWEQVLGRLWDYLRWVQTLSDQVQEELLNTQVIQELTVLMEETMKEVKAYREELEGQLAPMAQETQARVSKELQAAQARLGSDMEDLRNRLAQYRSEVQAMLGQSTEELRARMASHLRKLRKRLLRDADDLKKRLAVYQAGASEGAERSVSAIRERLRPLVEQGQSRAATLSTQAAQPLLDRAEAWRQKLHGRLEEVGVRAQDRLDKMRQQLEEVRAKVEEQGSQIRLQAEAFQARLRSWFEPLVGDMQRQWAGLVEKVQLALHLSPTSPPSENH.

The N-terminal stretch at 1–18 is a signal peptide; that stretch reads MKVLWVALVVALLAGCQA. 8 consecutive repeat copies span residues 79–100, 101–122, 123–144, 145–166, 167–188, 189–210, 211–232, and 233–254. The interval 79 to 254 is 8 X 22 AA approximate tandem repeats; that stretch reads VLMEETMKEV…RLDKMRQQLE (176 aa). Methionine 142 bears the Methionine sulfoxide mark. Serine 146 is subject to Phosphoserine. The segment at 157–167 is LDL and other lipoprotein receptors binding; sequence HLRKLRKRLLR. Position 161–164 (161–164) interacts with heparin; that stretch reads LRKR. Residues 209-289 form a lipid-binding and lipoprotein association region; it reads AATLSTQAAQ…SWFEPLVGDM (81 aa). Threonine 211 carries O-linked (GalNAc...) threonine glycosylation. Position 228 to 235 (228 to 235) interacts with heparin; the sequence is RQKLHGRL. The interval 265–316 is homooligomerization; that stretch reads SQIRLQAEAFQARLRSWFEPLVGDMQRQWAGLVEKVQLALHLSPTSPPSENH. Residues 277-289 are specificity for association with VLDL; that stretch reads RLRSWFEPLVGDM.

This sequence belongs to the apolipoprotein A1/A4/E family. Homotetramer. May interact with ABCA1; functionally associated with ABCA1 in the biogenesis of HDLs. May interact with APP/A4 amyloid-beta peptide; the interaction is extremely stable in vitro but its physiological significance is unclear. May interact with MAPT. May interact with MAP2. In the cerebrospinal fluid, interacts with secreted SORL1. Interacts with PMEL; this allows the loading of PMEL luminal fragment on ILVs to induce fibril nucleation. Post-translationally, APOE exists as multiple glycosylated and sialylated glycoforms within cells and in plasma. The extent of glycosylation and sialylation are tissue and context specific. In terms of processing, glycated in plasma VLDL. Phosphorylated by FAM20C in the extracellular medium.

The protein localises to the secreted. The protein resides in the extracellular space. Its subcellular location is the extracellular matrix. It localises to the extracellular vesicle. It is found in the endosome. The protein localises to the multivesicular body. APOE is an apolipoprotein, a protein associating with lipid particles, that mainly functions in lipoprotein-mediated lipid transport between organs via the plasma and interstitial fluids. APOE is a core component of plasma lipoproteins and is involved in their production, conversion and clearance. Apolipoproteins are amphipathic molecules that interact both with lipids of the lipoprotein particle core and the aqueous environment of the plasma. As such, APOE associates with chylomicrons, chylomicron remnants, very low density lipoproteins (VLDL) and intermediate density lipoproteins (IDL) but shows a preferential binding to high-density lipoproteins (HDL). It also binds a wide range of cellular receptors including the LDL receptor/LDLR and the very low-density lipoprotein receptor/VLDLR that mediate the cellular uptake of the APOE-containing lipoprotein particles. Finally, APOE also has a heparin-binding activity and binds heparan-sulfate proteoglycans on the surface of cells, a property that supports the capture and the receptor-mediated uptake of APOE-containing lipoproteins by cells. The protein is Apolipoprotein E (APOE) of Capra hircus aegagrus (Wild goat).